A 567-amino-acid chain; its full sequence is Polyadenylate-binding protein-interacting protein 7 (567 aa).

The segment at M1–L22 is disordered. Over residues S13–L22 the composition is skewed to polar residues. Residues T21–P31 carry the PAM2-like motif. Residues D215–L259 enclose the CUE domain. The tract at residues R355–S387 is disordered. The segment covering A359–A371 has biased composition (polar residues). The 83-residue stretch at I485–Y567 folds into the Smr domain.

In terms of assembly, interacts with MPC and PAB2. In terms of tissue distribution, expressed in cauline leaves, stems, rosette leaves, immature siliques and primary inflorescences.

The polypeptide is Polyadenylate-binding protein-interacting protein 7 (CID7) (Arabidopsis thaliana (Mouse-ear cress)).